Consider the following 308-residue polypeptide: Electron transfer flavoprotein subunit alpha (308 aa).

Residue 252 to 280 participates in FAD binding; the sequence is LYVAVGISGAIQHLAGMKDSKVIVAINKD.

Belongs to the ETF alpha-subunit/FixB family. As to quaternary structure, heterodimer of an alpha and a beta subunit. FAD serves as cofactor.

In terms of biological role, the electron transfer flavoprotein serves as a specific electron acceptor for other dehydrogenases. It transfers the electrons to the main respiratory chain via ETF-ubiquinone oxidoreductase (ETF dehydrogenase). This is Electron transfer flavoprotein subunit alpha (etfA) from Paracoccus denitrificans.